The following is a 66-amino-acid chain: Disk-determining factor A (66 aa).

Involved in cell-shape determination. Required for the formation of disks. This Haloferax volcanii (strain ATCC 29605 / DSM 3757 / JCM 8879 / NBRC 14742 / NCIMB 2012 / VKM B-1768 / DS2) (Halobacterium volcanii) protein is Disk-determining factor A.